Consider the following 465-residue polypeptide: Adenosylhomocysteinase (465 aa).

Substrate contacts are provided by Thr-56, Asp-131, and Glu-191. Residue 192–194 (TTT) coordinates NAD(+). Substrate contacts are provided by Lys-221 and Asp-225. Residues Asn-226, 255-260 (GYGNVG), Glu-278, Asn-313, 334-336 (IGH), and Asn-379 contribute to the NAD(+) site.

The protein belongs to the adenosylhomocysteinase family. It depends on NAD(+) as a cofactor.

Its subcellular location is the cytoplasm. The enzyme catalyses S-adenosyl-L-homocysteine + H2O = L-homocysteine + adenosine. The protein operates within amino-acid biosynthesis; L-homocysteine biosynthesis; L-homocysteine from S-adenosyl-L-homocysteine: step 1/1. In terms of biological role, may play a key role in the regulation of the intracellular concentration of adenosylhomocysteine. The polypeptide is Adenosylhomocysteinase (Bartonella quintana (strain Toulouse) (Rochalimaea quintana)).